Here is a 552-residue protein sequence, read N- to C-terminus: ATP synthase subunit alpha (552 aa).

Position 173 to 180 (173 to 180 (GDRQTGKS)) interacts with ATP. The segment at 509 to 552 (KPQFSGGSKGSNVPKDVDAGATDADDISQEKITTRKGGATAARG) is disordered.

The protein belongs to the ATPase alpha/beta chains family. F-type ATPases have 2 components, CF(1) - the catalytic core - and CF(0) - the membrane proton channel. CF(1) has five subunits: alpha(3), beta(3), gamma(1), delta(1), epsilon(1). CF(0) has three main subunits: a(1), b(2) and c(9-12). The alpha and beta chains form an alternating ring which encloses part of the gamma chain. CF(1) is attached to CF(0) by a central stalk formed by the gamma and epsilon chains, while a peripheral stalk is formed by the delta and b chains.

It localises to the cell membrane. The catalysed reaction is ATP + H2O + 4 H(+)(in) = ADP + phosphate + 5 H(+)(out). Functionally, produces ATP from ADP in the presence of a proton gradient across the membrane. The alpha chain is a regulatory subunit. The protein is ATP synthase subunit alpha of Kineococcus radiotolerans (strain ATCC BAA-149 / DSM 14245 / SRS30216).